Consider the following 382-residue polypeptide: 4-hydroxy-3-methylbut-2-en-1-yl diphosphate synthase (flavodoxin) (382 aa).

[4Fe-4S] cluster is bound by residues Cys273, Cys276, Cys308, and Glu315.

The protein belongs to the IspG family. The cofactor is [4Fe-4S] cluster.

The catalysed reaction is (2E)-4-hydroxy-3-methylbut-2-enyl diphosphate + oxidized [flavodoxin] + H2O + 2 H(+) = 2-C-methyl-D-erythritol 2,4-cyclic diphosphate + reduced [flavodoxin]. Its pathway is isoprenoid biosynthesis; isopentenyl diphosphate biosynthesis via DXP pathway; isopentenyl diphosphate from 1-deoxy-D-xylulose 5-phosphate: step 5/6. Functionally, converts 2C-methyl-D-erythritol 2,4-cyclodiphosphate (ME-2,4cPP) into 1-hydroxy-2-methyl-2-(E)-butenyl 4-diphosphate. The protein is 4-hydroxy-3-methylbut-2-en-1-yl diphosphate synthase (flavodoxin) of Gluconacetobacter diazotrophicus (strain ATCC 49037 / DSM 5601 / CCUG 37298 / CIP 103539 / LMG 7603 / PAl5).